The sequence spans 588 residues: Cyclomaltodextrinase (588 aa).

Substrate contacts are provided by histidine 247 and arginine 326. Aspartate 328 functions as the Nucleophile in the catalytic mechanism. Glutamate 357 serves as the catalytic Proton donor. Substrate is bound by residues 423–424, aspartate 468, and arginine 472; that span reads HD.

This sequence belongs to the glycosyl hydrolase 13 family. In terms of assembly, exists as a monomer or a homodimer in solution. Homodimer is more active and stable than the monomer.

The catalysed reaction is cyclomaltodextrin + H2O = linear maltodextrin. Its activity is regulated as follows. No metal dependence, but Mn(2+) increases the activity with alpha-cyclodextrin as substrate. No effect on the activity with presence or absence of Ca(2+), Zn(2+), Tween-20 or EDTA. Hydrolyzes alpha-, beta- and gamma-cyclodextrins with the highest activity with alpha-cyclodextrin (cyclomaltohexaose). Pullulan is the preferred substrate from linear substrates. Maltose is a major product of these reactions. Is also able to hydrolyze maltotriose and acarbose, and transglycosylate their hydrolytic products. Major reaction products of maltotriose and of acarbose are maltose and glucose, and glucose and pseudotrisaccharide, respectively. No activity with glucose or maltose as substrate. This chain is Cyclomaltodextrinase, found in Geobacillus thermopakistaniensis (strain MAS1).